The following is a 350-amino-acid chain: Peroxidase 10 (350 aa).

Residues 1-27 (MDHKMSMYLFVSYLAIFTLFFKGFVSS) form the signal peptide. 4 disulfides stabilise this stretch: Cys-57–Cys-137, Cys-90–Cys-95, Cys-143–Cys-346, and Cys-222–Cys-256. The Proton acceptor role is filled by His-88. The Ca(2+) site is built by Asp-89, Val-92, Gly-94, Asp-96, and Ser-98. An N-linked (GlcNAc...) asparagine glycan is attached at Asn-102. A substrate-binding site is contributed by Pro-185. N-linked (GlcNAc...) asparagine glycosylation occurs at Asn-193. His-215 is a binding site for heme b. Thr-216 is a binding site for Ca(2+). Ca(2+)-binding residues include Asp-270, Ser-273, and Asp-278.

The protein belongs to the peroxidase family. Classical plant (class III) peroxidase subfamily. Heme b is required as a cofactor. Requires Ca(2+) as cofactor. In terms of tissue distribution, expressed in the whole plant, with the highest expression in roots.

It localises to the secreted. It catalyses the reaction 2 a phenolic donor + H2O2 = 2 a phenolic radical donor + 2 H2O. Functionally, removal of H(2)O(2), oxidation of toxic reductants, biosynthesis and degradation of lignin, suberization, auxin catabolism, response to environmental stresses such as wounding, pathogen attack and oxidative stress. These functions might be dependent on each isozyme/isoform in each plant tissue. In Arabidopsis thaliana (Mouse-ear cress), this protein is Peroxidase 10 (PER10).